A 147-amino-acid chain; its full sequence is Hemoglobin subunit beta (147 aa).

An N-acetylvaline modification is found at valine 2. In terms of domain architecture, Globin spans 3-147 (HLTGEEKAAV…VANALAHKYH (145 aa)). Position 13 is a phosphothreonine (threonine 13). Position 45 is a phosphoserine (serine 45). Lysine 60 carries the N6-acetyllysine modification. A heme b-binding site is contributed by histidine 64. Lysine 83 is modified (N6-acetyllysine). Histidine 93 provides a ligand contact to heme b. Cysteine 94 bears the S-nitrosocysteine mark. Position 145 is an N6-acetyllysine (lysine 145).

Belongs to the globin family. As to quaternary structure, heterotetramer of two alpha chains and two beta chains. As to expression, red blood cells.

Involved in oxygen transport from the lung to the various peripheral tissues. The sequence is that of Hemoglobin subunit beta (HBB) from Lagothrix lagotricha (Brown woolly monkey).